Here is a 185-residue protein sequence, read N- to C-terminus: Ribosome-recycling factor (185 aa).

Residues 141–161 form a disordered region; that stretch reads KQEKDKKISEDDLKRAEKEVQ.

It belongs to the RRF family.

It localises to the cytoplasm. Functionally, responsible for the release of ribosomes from messenger RNA at the termination of protein biosynthesis. May increase the efficiency of translation by recycling ribosomes from one round of translation to another. The polypeptide is Ribosome-recycling factor (Geotalea uraniireducens (strain Rf4) (Geobacter uraniireducens)).